The sequence spans 77 residues: Large ribosomal subunit protein uL29 (77 aa).

The protein belongs to the universal ribosomal protein uL29 family.

This is Large ribosomal subunit protein uL29 from Mycobacterium avium (strain 104).